Here is a 517-residue protein sequence, read N- to C-terminus: MRKINFFDTTLRDGEQSPGVNLNAQEKLIIAKQLERLGVNIIEAGFPASSRGDFLGVQEIARTIKNCSVAGLARCVKGDIDAAWEALKDGVEPRLHVFIATSDIHLKHKLKKTREEVVEQAVAMVKYAKERFPVVQWSAEDACRTDLDFLAEIVEKVIDAGASVINLPDTVGYLAPKEYGNIFKYMKEHVPNIDRVNLSAHCHDDLGMAVANSLAAIENGADQIETAVNGIGERAGNAALEEIAVALHIRKDFYQVESTIQLNEIKRTSDVVSKYSGMIVPRNKAVVGNNAFAHESGIHQDGFLKEKTTYEIISPELVGVTTDVLVLGKHSGRHAFKDRMKTLGFKLTEEEINKFFETFKNLTEKKKEITDDDLISIILEEKVADRKIGYEFESLQVHYGTEQMPTATVSLKNQETQEVIQEAATGAGSVEAVYNTLERCMEERIHLLDYRIQSNGKGRDALAEVYVTVSIEGKETAGRGVAQDVLEASAKAYVNAVNRHLIFKSNLIEIEKHHAIS.

Residues I4–K266 enclose the Pyruvate carboxyltransferase domain. Mn(2+) is bound by residues D13, H201, H203, and N237. The tract at residues E391–S517 is regulatory domain.

This sequence belongs to the alpha-IPM synthase/homocitrate synthase family. LeuA type 1 subfamily. As to quaternary structure, homodimer. Mn(2+) is required as a cofactor.

It is found in the cytoplasm. It carries out the reaction 3-methyl-2-oxobutanoate + acetyl-CoA + H2O = (2S)-2-isopropylmalate + CoA + H(+). Its pathway is amino-acid biosynthesis; L-leucine biosynthesis; L-leucine from 3-methyl-2-oxobutanoate: step 1/4. Its function is as follows. Catalyzes the condensation of the acetyl group of acetyl-CoA with 3-methyl-2-oxobutanoate (2-ketoisovalerate) to form 3-carboxy-3-hydroxy-4-methylpentanoate (2-isopropylmalate). This Bacillus pumilus (strain SAFR-032) protein is 2-isopropylmalate synthase.